A 198-amino-acid polypeptide reads, in one-letter code: Pyridoxine/pyridoxamine 5'-phosphate oxidase 2 (198 aa).

FMN is bound by residues Arg-42, 59–60 (NT), Lys-66, and 121–122 (RS).

Belongs to the pyridoxamine 5'-phosphate oxidase family. In terms of assembly, homodimer. Requires FMN as cofactor.

It catalyses the reaction pyridoxamine 5'-phosphate + O2 + H2O = pyridoxal 5'-phosphate + H2O2 + NH4(+). The enzyme catalyses pyridoxine 5'-phosphate + O2 = pyridoxal 5'-phosphate + H2O2. The protein operates within cofactor metabolism; pyridoxal 5'-phosphate salvage; pyridoxal 5'-phosphate from pyridoxamine 5'-phosphate: step 1/1. It functions in the pathway cofactor metabolism; pyridoxal 5'-phosphate salvage; pyridoxal 5'-phosphate from pyridoxine 5'-phosphate: step 1/1. Its function is as follows. Catalyzes the oxidation of either pyridoxine 5'-phosphate (PNP) or pyridoxamine 5'-phosphate (PMP) into pyridoxal 5'-phosphate (PLP). Has an in vitro catalytic efficiency for PNP approximately 300-fold lower than that of PPOX1. The chain is Pyridoxine/pyridoxamine 5'-phosphate oxidase 2 (PPOX2) from Arabidopsis thaliana (Mouse-ear cress).